A 472-amino-acid polypeptide reads, in one-letter code: Na(+)/H(+) antiporter NhaA 1 (472 aa).

Transmembrane regions (helical) follow at residues 34-54 (TASITLLLAAIAAMVIANSQW), 86-106 (GLMVLFFFLLGLEIKYECLVG), 116-136 (LVIAMAIGGMLLPAGIYAGVA), 146-166 (GWGIPMATDTAFALGILALLG), 175-195 (VTLSALAIVDDMGAVAVIGLF), 203-223 (TSLMYAGLTLGGLFALNVLGF), 227-247 (IFYLVGGILLWWFVLQSGVHA), 324-344 (PVSLIILPIFAFINAGVALPD), 353-373 (VVFIGVASAMVLGKVIGISVF), 394-414 (VFALACLAGVGFTMSLFIASL), and 428-448 (LGILAGSVIAAIIGTTLFLMI).

It belongs to the NhaA Na(+)/H(+) (TC 2.A.33) antiporter family.

Its subcellular location is the cell inner membrane. It carries out the reaction Na(+)(in) + 2 H(+)(out) = Na(+)(out) + 2 H(+)(in). Its function is as follows. Na(+)/H(+) antiporter that extrudes sodium in exchange for external protons. This chain is Na(+)/H(+) antiporter NhaA 1, found in Pseudoalteromonas atlantica (strain T6c / ATCC BAA-1087).